A 560-amino-acid polypeptide reads, in one-letter code: Nuclear hormone receptor family member nhr-8 (560 aa).

The interval 1–21 (MPSSSPSMDESRRSAVPPKEP) is disordered. Positions 23-98 (GRICTVCSDR…VGMNSEWLND (76 aa)) form a DNA-binding region, nuclear receptor. 2 NR C4-type zinc fingers span residues 26 to 46 (CTVC…CESC) and 62 to 86 (CPFS…LNKC). The NR LBD domain occupies 336–560 (DEITLLEELH…PLIRELCSFE (225 aa)).

It belongs to the nuclear hormone receptor family.

Its subcellular location is the nucleus. Its function is as follows. Orphan nuclear receptor. This chain is Nuclear hormone receptor family member nhr-8 (nhr-8), found in Caenorhabditis elegans.